Consider the following 275-residue polypeptide: Polar tube protein 2 (275 aa).

A signal peptide spans 1–18 (MLLLLSAVAFVSATAVQS). 2 N-linked (GlcNAc...) asparagine glycosylation sites follow: Asn-132 and Asn-248. The disordered stretch occupies residues 233 to 275 (IQKKEIKESPKEGDRNTTQEYDGEGSAEDAEGQQPSADGEGLE). Over residues 234 to 249 (QKKEIKESPKEGDRNT) the composition is skewed to basic and acidic residues. Residues 253–263 (YDGEGSAEDAE) are compositionally biased toward acidic residues.

The protein resides in the spore polar tube. Functionally, involved in formation of a polar tube through which the infectious agent is passed on to the host cell. This Encephalitozoon intestinalis (Microsporidian parasite) protein is Polar tube protein 2 (PTP2).